Reading from the N-terminus, the 90-residue chain is Small ribosomal subunit protein bS20 (90 aa).

A disordered region spans residues 1–25 (MANSPSAKKRAKQAEKRRSHNASLR). Over residues 7-20 (AKKRAKQAEKRRSH) the composition is skewed to basic residues.

Belongs to the bacterial ribosomal protein bS20 family.

Functionally, binds directly to 16S ribosomal RNA. In Pseudomonas fluorescens (strain Pf0-1), this protein is Small ribosomal subunit protein bS20.